The following is a 262-amino-acid chain: uncharacterized protein (262 aa).

The first 22 residues, 1 to 22, serve as a signal peptide directing secretion; that stretch reads MGYLKRFALYISVMILIFAIAG. C23 carries the N-palmitoyl cysteine lipid modification. A lipid anchor (S-diacylglycerol cysteine) is attached at C23.

It belongs to the staphylococcal tandem lipoprotein family.

The protein resides in the cell membrane. This is an uncharacterized protein from Staphylococcus aureus (strain NCTC 8325 / PS 47).